Consider the following 315-residue polypeptide: CRISPR-associated endonuclease Cas1 1 (315 aa).

Residues E144, H208, and E223 each contribute to the Mn(2+) site.

The protein belongs to the CRISPR-associated endonuclease Cas1 family. Homodimer, forms a heterotetramer with a Cas2 homodimer. The cofactor is Mg(2+). Requires Mn(2+) as cofactor.

In terms of biological role, CRISPR (clustered regularly interspaced short palindromic repeat), is an adaptive immune system that provides protection against mobile genetic elements (viruses, transposable elements and conjugative plasmids). CRISPR clusters contain spacers, sequences complementary to antecedent mobile elements, and target invading nucleic acids. CRISPR clusters are transcribed and processed into CRISPR RNA (crRNA). Acts as a dsDNA endonuclease. Involved in the integration of spacer DNA into the CRISPR cassette. The sequence is that of CRISPR-associated endonuclease Cas1 1 from Thermus thermophilus (strain ATCC 27634 / DSM 579 / HB8).